Here is a 165-residue protein sequence, read N- to C-terminus: Cyclic pyranopterin monophosphate synthase (165 aa).

Substrate-binding positions include 79–81 (LCH) and 117–118 (ME). Asp132 is an active-site residue.

Belongs to the MoaC family. In terms of assembly, homohexamer; trimer of dimers.

It catalyses the reaction (8S)-3',8-cyclo-7,8-dihydroguanosine 5'-triphosphate = cyclic pyranopterin phosphate + diphosphate. It participates in cofactor biosynthesis; molybdopterin biosynthesis. Functionally, catalyzes the conversion of (8S)-3',8-cyclo-7,8-dihydroguanosine 5'-triphosphate to cyclic pyranopterin monophosphate (cPMP). In Chloroflexus aggregans (strain MD-66 / DSM 9485), this protein is Cyclic pyranopterin monophosphate synthase.